The sequence spans 705 residues: Calpain-1 catalytic subunit (705 aa).

The Calpain catalytic domain maps to 48–347 (LFRDPQFPAG…FSRLEICNLT (300 aa)). Catalysis depends on residues Cys108, His265, and Asn289. Positions 348–517 (PDALTKDELS…KQSDTAELDE (170 aa)) are domain III. Positions 518 to 533 (EISADLADEEEITEDD) are linker. The region spanning 530–565 (TEDDIEDGFKNMFQQLAGEDMEISVFELKTILNRVI) is the EF-hand 1 domain. The domain IV stretch occupies residues 534-704 (IEDGFKNMFQ…LAEWLLLTMC (171 aa)). Asp549, Glu551, Glu556, Asp589, Asp591, Ser593, Arg595, Glu600, Asp619, Asp621, Ser623, Thr625, and Glu630 together coordinate Ca(2+). EF-hand domains lie at 606–641 (NKIR…AGFK) and 671–705 (VKLE…TMCG).

It belongs to the peptidase C2 family. As to quaternary structure, heterodimer of large (catalytic) and a small (regulatory) subunit. Ca(2+) is required as a cofactor. The N-terminus is blocked. Ubiquitously expressed.

Its subcellular location is the cytoplasm. It localises to the cell membrane. It catalyses the reaction Broad endopeptidase specificity.. Its activity is regulated as follows. Activated by micromolar concentrations of calcium and inhibited by calpastatin. Functionally, calcium-regulated non-lysosomal thiol-protease which catalyze limited proteolysis of substrates involved in cytoskeletal remodeling and signal transduction. In Gallus gallus (Chicken), this protein is Calpain-1 catalytic subunit.